A 96-amino-acid polypeptide reads, in one-letter code: MNIRPLHDRVIVERKEVESKSAGGIVLTGSAAEKSTRGVVLAVGKGRILENGTVLPLDVKVGDTVIFAEGYGTKTEKIDGKEVLVMSENDIMAIVE.

The protein belongs to the GroES chaperonin family. As to quaternary structure, heptamer of 7 subunits arranged in a ring. Interacts with the chaperonin GroEL.

It is found in the cytoplasm. Functionally, together with the chaperonin GroEL, plays an essential role in assisting protein folding. The GroEL-GroES system forms a nano-cage that allows encapsulation of the non-native substrate proteins and provides a physical environment optimized to promote and accelerate protein folding. GroES binds to the apical surface of the GroEL ring, thereby capping the opening of the GroEL channel. The polypeptide is Co-chaperonin GroES (Vibrio campbellii (strain ATCC BAA-1116)).